Here is a 508-residue protein sequence, read N- to C-terminus: Adenylosuccinate synthetase 1, chloroplastic (508 aa).

The transit peptide at 1-56 (MNISILRLDSNPITTATSPATATANHRSGILGCYNGTYSCRLNQLQQRKKNPSIIV) directs the protein to the chloroplast. Residues 95–101 (GDEGKGK) and 123–125 (GHT) each bind GTP. The Proton acceptor role is filled by Asp96. Positions 96 and 123 each coordinate Mg(2+). Residues 96-99 (DEGK), 121-124 (NAGH), Thr213, Arg227, Gln307, Thr322, and Arg386 each bind IMP. The active-site Proton donor is the His124. A substrate-binding site is contributed by 382–388 (TTTGRPR). Residues Arg388, 414–416 (KLD), and 497–499 (GIG) contribute to the GTP site.

This sequence belongs to the adenylosuccinate synthetase family. As to quaternary structure, homodimer. It depends on Mg(2+) as a cofactor.

It localises to the plastid. The protein localises to the chloroplast. It catalyses the reaction IMP + L-aspartate + GTP = N(6)-(1,2-dicarboxyethyl)-AMP + GDP + phosphate + 2 H(+). It participates in purine metabolism; AMP biosynthesis via de novo pathway; AMP from IMP: step 1/2. Its function is as follows. Plays an important role in the de novo pathway and in the salvage pathway of purine nucleotide biosynthesis. Catalyzes the first committed step in the biosynthesis of AMP from IMP. The protein is Adenylosuccinate synthetase 1, chloroplastic of Capsicum frutescens (Cayenne pepper).